Consider the following 872-residue polypeptide: Probable cation-transporting P-type ATPase (872 aa).

At 1–41 (MNKWTGLSAAAVLESRAQHGANLIPTKKLTPFWLLFLEQFK) the chain is on the cytoplasmic side. A helical transmembrane segment spans residues 42 to 62 (SLVVILLLVATILSLVVAIIS). Residues 63 to 79 (GVNANWLFDHNLVIEWT) are Extracellular-facing. The chain crosses the membrane as a helical span at residues 80-100 (QPFVILITVLANSLIGSIQEF). Topologically, residues 101–237 (KAQKSAHTLK…TKLSPLQQKL (137 aa)) are cytoplasmic. Residues 238-257 (EKVGKWFSWFGLGLFVVVFL) traverse the membrane as a helical segment. Over 258 to 275 (VQLGLLGFHNFSANWSIA) the chain is Extracellular. Residues 276–293 (LIGAIALVVAIIPEGLVT) traverse the membrane as a helical segment. Topologically, residues 294–642 (FINVIFALSV…EQGRKTFLTC (349 aa)) are cytoplasmic. The active-site 4-aspartylphosphate intermediate is the D331. Mg(2+)-binding residues include D587 and D591. A helical transmembrane segment spans residues 643–662 (KRVLFNLFLTSIAGTIVVLL). The Extracellular segment spans residues 663–685 (GLFVLGEVFREQLSKANHNFQVF). A helical membrane pass occupies residues 686 to 706 (TPTQLLIINLFVHGFPAVALA). Residues 707–724 (IQPVQEKLMLKPFSTKNL) lie on the Cytoplasmic side of the membrane. The chain crosses the membrane as a helical span at residues 725–747 (FYNRGGFDLIWQSLLLSFLTLLF). Residues 748 to 768 (YSLGMVYAINDPELGKSGDLI) lie on the Extracellular side of the membrane. Residues 769 to 788 (NRAGATCGFMVLGGSAALNS) traverse the membrane as a helical segment. Over 789-801 (LNLMVDRPLVATN) the chain is Cytoplasmic. Residues 802–824 (PKHYGIVWLGALSSIFVFLLIIF) form a helical membrane-spanning segment. Residues 825–842 (INPLGLVFSTLKDLTAHP) are Extracellular-facing. A helical transmembrane segment spans residues 843–863 (VLIGYSFGGVLLYMTINEVVK). The Cytoplasmic segment spans residues 864 to 872 (LIRLSYGSV).

It belongs to the cation transport ATPase (P-type) (TC 3.A.3) family. Type II subfamily.

It localises to the cell membrane. The enzyme catalyses ATP + H2O = ADP + phosphate + H(+). Could mediate calcium influx. The sequence is that of Probable cation-transporting P-type ATPase (pacL) from Mycoplasma pneumoniae (strain ATCC 29342 / M129 / Subtype 1) (Mycoplasmoides pneumoniae).